Reading from the N-terminus, the 506-residue chain is Exoglucanase (506 aa).

An N-terminal signal peptide occupies residues 1–18 (MFPRSILLALSLTAVALG). The tract at residues 19–450 (QQVGTNMAEN…IKFGDINSTF (432 aa)) is catalytic. Residue E227 is the Nucleophile of the active site. The active-site Proton donor is the E232. N308 carries an N-linked (GlcNAc...) asparagine glycan. Residues 405–426 (ASPSQPGISRGTCSRDSGKPED) are disordered. The segment covering 406–419 (SPSQPGISRGTCSR) has biased composition (polar residues). An N-linked (GlcNAc...) asparagine glycan is attached at N447. The interval 449-472 (TFNNNGGGGGNPSPTTTRPNSPAQ) is disordered. Residues 451–473 (NNNGGGGGNPSPTTTRPNSPAQT) are linker. Low complexity predominate over residues 460–470 (PSPTTTRPNSP). One can recognise a CBM1 domain in the interval 470–506 (PAQTMWGQCGGQGWTGPTACQSPSTCHVINDFYSQCF). Disulfide bonds link C478/C495 and C489/C505.

The protein belongs to the glycosyl hydrolase 7 (cellulase C) family.

The enzyme catalyses Hydrolysis of (1-&gt;4)-beta-D-glucosidic linkages in cellulose and cellotetraose, releasing cellobiose from the non-reducing ends of the chains.. Functionally, the biological conversion of cellulose to glucose generally requires three types of hydrolytic enzymes: (1) Endoglucanases which cut internal beta-1,4-glucosidic bonds; (2) Exocellobiohydrolases that cut the disaccharide cellobiose from the non-reducing end of the cellulose polymer chain; (3) Beta-1,4-glucosidases which hydrolyze the cellobiose and other short cello-oligosaccharides to glucose. This chain is Exoglucanase (cel2), found in Agaricus bisporus (White button mushroom).